The chain runs to 159 residues: Cyclin-dependent kinase inhibitor 1 (159 aa).

The residue at position 2 (Ser-2) is an N-acetylserine. Ser-2 participates in a covalent cross-link: Glycyl serine ester (Ser-Gly) (interchain with G-Cter in ubiquitin). A C4-type zinc finger spans residues 12-40 (HRSKVCRCLFGPVDSEQLRRDCDALMAGC). A required for binding cyclins region spans residues 17-24 (CRCLFGPV). The required for binding CDKs stretch occupies residues 53-58 (VTETPL). Ser-78 carries the phosphoserine; by NUAK1 modification. Positions 78-106 (SPGSRSRDDLGGDKRPSTSSALLQGPAPE) are disordered. Positions 82–93 (RSRDDLGGDKRP) are enriched in basic and acidic residues. Ser-112 is modified (phosphoserine; by GSK3-beta). Positions 118 to 142 (VSERPEDSPGGPGTSQGRKRRQTSL) are disordered. The residue at position 125 (Ser-125) is a Phosphoserine. The short motif at 135–159 (RKRRQTSLTDFYHSKRRLVFCKRKP) is the PIP-box K+4 motif element. Position 140 is a phosphothreonine; by PKA, PKB/AKT1, PIM1 and PIM2 (Thr-140). Residue Ser-141 is modified to Phosphoserine; by NUAK1. The interval 147 to 159 (HSKRRLVFCKRKP) is interaction with TRIM39.

The protein belongs to the CDI family. In terms of assembly, interacts with HDAC1; the interaction is prevented by competitive binding of C10orf90/FATS to HDAC1 facilitating acetylation and protein stabilization of CDKN1A/p21. Interacts with MKRN1. Interacts with PSMA3. Interacts with PCNA. Component of the ternary complex, cyclin D-CDK4-CDKN1A. Interacts (via its N-terminal domain) with CDK4; the interaction promotes the assembly of the cyclin D-CDK4 complex, its nuclear translocation and promotes the cyclin D-dependent enzyme activity of CDK4. Binding to CDK2 leads to CDK2/cyclin E inactivation at the G1-S phase DNA damage checkpoint, thereby arresting cells at the G1-S transition during DNA repair. Interacts with PIM1. Interacts with STK11. Interacts with NUAK1. Interacts with DTL and TRIM39. Interacts with PKP3; the interaction sequesters CDKN1A to the cytoplasm thereby repressing its role as an inhibitor of CDK4- and CDK6-driven RB1 phosphorylation. Phosphorylation of Thr-140 or Ser-141 impairs binding to PCNA. Phosphorylation at Ser-112 by GSK3-beta enhances ubiquitination by the DCX(DTL) complex. Phosphorylation of Thr-140 by PIM2 enhances its stability and inhibits cell proliferation. Phosphorylation of Thr-140 by PIM1 results in the relocation of CDKN1A to the cytoplasm and enhanced CDKN1A protein stability. UV radiation-induced phosphorylation at Ser-78 and Ser-141 by NUAK1 leads to its degradation. Post-translationally, ubiquitinated by MKRN1; leading to polyubiquitination and 26S proteasome-dependent degradation. Ubiquitinated by the DCX(DTL) complex, also named CRL4(CDT2) complex, leading to its degradation during S phase or following UV irradiation. Ubiquitination by the DCX(DTL) complex is essential to control replication licensing and is PCNA-dependent: interacts with PCNA via its PIP-box, while the presence of the containing the 'K+4' motif in the PIP box, recruit the DCX(DTL) complex, leading to its degradation. Ubiquitination at Ser-2 leads to degradation by the proteasome pathway. Ubiquitinated by RNF114; leading to proteasomal degradation. In terms of processing, acetylation leads to protein stability. Acetylated in vitro on Lys-136, Lys-149, Lys-156 and Lys-158. Deacetylation by HDAC1 is prevented by competitive binding of C10orf90/FATS to HDAC1. In terms of tissue distribution, expressed in keratinocytes (at protein level).

The protein localises to the cytoplasm. It localises to the nucleus. Its function is as follows. May be involved in p53/TP53 mediated inhibition of cellular proliferation in response to DNA damage. Binds to and inhibits cyclin-dependent kinase activity, preventing phosphorylation of critical cyclin-dependent kinase substrates and blocking cell cycle progression. Functions in the nuclear localization and assembly of cyclin D-CDK4 complex and promotes its kinase activity towards RB1. At higher stoichiometric ratios, inhibits the kinase activity of the cyclin D-CDK4 complex. Inhibits DNA synthesis by DNA polymerase delta by competing with POLD3 for PCNA binding. Plays an important role in controlling cell cycle progression and DNA damage-induced G2 arrest. Functionally, plays an important role in controlling cell cycle progression and DNA damage-induced G2 arrest. Involved in p53/TP53 mediated inhibition of cellular proliferation in response to DNA damage. Also involved in p53-independent DNA damage-induced G2 arrest mediated by CREB3L1 in astrocytes and osteoblasts. Binds to and inhibits cyclin-dependent kinase activity, preventing phosphorylation of critical cyclin-dependent kinase substrates and blocking cell cycle progression. Functions in the nuclear localization and assembly of cyclin D-CDK4 complex and promotes its kinase activity towards RB1. At higher stoichiometric ratios, inhibits the kinase activity of the cyclin D-CDK4 complex. Inhibits DNA synthesis by DNA polymerase delta by competing with POLD3 for PCNA binding. Negatively regulates the CDK4- and CDK6-driven phosphorylation of RB1 in keratinocytes, thereby resulting in the release of E2F1 and subsequent transcription of E2F1-driven G1/S phase promoting genes. In Mus musculus (Mouse), this protein is Cyclin-dependent kinase inhibitor 1 (Cdkn1a).